The chain runs to 200 residues: Putative 3-methyladenine DNA glycosylase (200 aa).

Belongs to the DNA glycosylase MPG family.

This chain is Putative 3-methyladenine DNA glycosylase, found in Shouchella clausii (strain KSM-K16) (Alkalihalobacillus clausii).